The primary structure comprises 97 residues: UPF0250 protein RSc0326 (97 aa).

The protein belongs to the UPF0250 family.

This chain is UPF0250 protein RSc0326, found in Ralstonia nicotianae (strain ATCC BAA-1114 / GMI1000) (Ralstonia solanacearum).